The sequence spans 448 residues: B-cell lymphoma 3 protein homolog (448 aa).

Positions 1-54 (MPRCPAGAMDEGPVDLRTRPKGTPGAALPLRKRPLRPASPEPATTRSPAGPLDA) are disordered. Ser-39 bears the Phosphoserine mark. 7 ANK repeats span residues 129–161 (DGDT…REVD), 166–195 (LRQT…SPMA), 199–228 (HGQT…SGSV), 236–265 (EGLT…DIDA), 270–299 (SGRS…NVNA), 303–332 (SGSS…DSGL), and 333–362 (KNCH…RAAS). The segment at 356-448 (KASRAASGSQ…VPPSPAPGSS (93 aa)) is disordered. Positions 361 to 376 (ASGSQPEPSPDQSATN) are enriched in polar residues. Ser-369 carries the phosphoserine modification. Over residues 377–398 (SPESSSRLSSNGLQSSPSSSPS) the composition is skewed to low complexity. Phosphoserine; by GSK3 occurs at positions 396 and 400. Residues 411 to 423 (TPQNFFLPTTSTP) are compositionally biased toward polar residues. Residues 425–436 (FLPFPGVLRGPG) are compositionally biased toward low complexity. The span at 437–448 (RPVPPSPAPGSS) shows a compositional bias: pro residues.

Component of a complex consisting of the NF-kappa-B p52-p52 homodimer and BCL3. Component of a complex consisting of the NF-kappa-B p50-p50 homodimer and BCL3. Interacts with N4BP2, COPS5 and PIR. Interacts with CYLD. Post-translationally, polyubiquitinated. Ubiquitination via 'Lys-63'-linked ubiquitin chains is required for nuclear accumulation. Deubiquitinated by CYLD, which acts on 'Lys-63'-linked ubiquitin chains. Deubiquitination by CYLD prevents nuclear accumulation. In terms of processing, activated by phosphorylation.

The protein resides in the nucleus. It is found in the cytoplasm. It localises to the perinuclear region. Contributes to the regulation of transcriptional activation of NF-kappa-B target genes. In the cytoplasm, inhibits the nuclear translocation of the NF-kappa-B p50 subunit. In the nucleus, acts as a transcriptional activator that promotes transcription of NF-kappa-B target genes. Contributes to the regulation of cell proliferation. The polypeptide is B-cell lymphoma 3 protein homolog (Bcl3) (Mus musculus (Mouse)).